Consider the following 69-residue polypeptide: Large ribosomal subunit protein uL29 (69 aa).

The protein belongs to the universal ribosomal protein uL29 family.

The sequence is that of Large ribosomal subunit protein uL29 from Sulfolobus acidocaldarius (strain ATCC 33909 / DSM 639 / JCM 8929 / NBRC 15157 / NCIMB 11770).